We begin with the raw amino-acid sequence, 142 residues long: Mitochondrial import receptor subunit TOM22 homolog (142 aa).

Residues 1 to 18 (MAAAVAAAGAGEPLSPEE) are compositionally biased toward low complexity. The tract at residues 1–41 (MAAAVAAAGAGEPLSPEELLPKAEAEKAEEELEEDDDDELD) is disordered. Ala2 is modified (N-acetylalanine). Over 2–83 (AAAVAAAGAG…AQKMYRFSRA (82 aa)) the chain is Cytoplasmic. Residue Ser15 is modified to Phosphoserine. Positions 27–41 (KAEEELEEDDDDELD) are enriched in acidic residues. Residues 41-50 (DETLSERLWG) form an import sequence; necessary for mitochondrion outer membrane localization and integration in the TOM complex region. Thr43 is modified (phosphothreonine). At Ser45 the chain carries Phosphoserine. Residues 83–103 (AALWIGTTSFMILVLPVVFET) are TMD; necessary for mitochondrion outer membrane localization and integration in the TOM complex. Residues 84–103 (ALWIGTTSFMILVLPVVFET) form a helical membrane-spanning segment. The Mitochondrial intermembrane segment spans residues 104-142 (EKLQMEQQQQLQQRQILLGPNTGLSGGMPGALPPLPGKM). The tract at residues 123–142 (PNTGLSGGMPGALPPLPGKM) is C-tail signal; necessary for mitochondrion outer membrane localization and integration in the TOM complex.

This sequence belongs to the Tom22 family. Forms part of the preprotein translocase complex of the outer mitochondrial membrane (TOM complex) which consists of at least 7 different proteins (TOMM5, TOMM6, TOMM7, TOMM20, TOMM22, TOMM40 and TOMM70). Interacts with PPP2R2B and TOMM40.

Its subcellular location is the mitochondrion outer membrane. Central receptor component of the translocase of the outer membrane of mitochondria (TOM complex) responsible for the recognition and translocation of cytosolically synthesized mitochondrial preproteins. Together with the peripheral receptor TOM20 functions as the transit peptide receptor and facilitates the movement of preproteins into the translocation pore. Required for the translocation across the mitochondrial outer membrane of cytochrome P450 monooxygenases. This is Mitochondrial import receptor subunit TOM22 homolog (Tomm22) from Mus musculus (Mouse).